Here is a 91-residue protein sequence, read N- to C-terminus: Probable Fe(2+)-trafficking protein (91 aa).

Belongs to the Fe(2+)-trafficking protein family.

In terms of biological role, could be a mediator in iron transactions between iron acquisition and iron-requiring processes, such as synthesis and/or repair of Fe-S clusters in biosynthetic enzymes. The protein is Probable Fe(2+)-trafficking protein of Ralstonia pickettii (strain 12J).